The chain runs to 70 residues: Large ribosomal subunit protein eL38 (70 aa).

This sequence belongs to the eukaryotic ribosomal protein eL38 family.

This chain is Large ribosomal subunit protein eL38 (RPL38), found in Artemia franciscana (Brine shrimp).